Reading from the N-terminus, the 165-residue chain is Large ribosomal subunit protein uL11A (165 aa).

Position 2 is a n,N-dimethylproline; by NTM1 (Pro2). N6,N6,N6-trimethyllysine; by RKM2 is present on residues Lys4 and Lys11. Phosphoserine occurs at positions 25 and 38. N5-methylarginine; by RMT2 is present on Arg67. Residues Lys130 and Lys146 each participate in a glycyl lysine isopeptide (Lys-Gly) (interchain with G-Cter in ubiquitin) cross-link.

This sequence belongs to the universal ribosomal protein uL11 family. Component of the large ribosomal subunit (LSU). Mature yeast ribosomes consist of a small (40S) and a large (60S) subunit. The 40S small subunit contains 1 molecule of ribosomal RNA (18S rRNA) and 33 different proteins (encoded by 57 genes). The large 60S subunit contains 3 rRNA molecules (25S, 5.8S and 5S rRNA) and 46 different proteins (encoded by 81 genes). It appears that the main modified species for L12 contains 6 methyl groups, 2 on Pro-2, 3 on Lys-4 and 1 on Arg-67. Although not reproduced with a second method, methylation at Lys-11 cannot be ruled out.

The protein resides in the cytoplasm. Its function is as follows. Component of the ribosome, a large ribonucleoprotein complex responsible for the synthesis of proteins in the cell. The small ribosomal subunit (SSU) binds messenger RNAs (mRNAs) and translates the encoded message by selecting cognate aminoacyl-transfer RNA (tRNA) molecules. The large subunit (LSU) contains the ribosomal catalytic site termed the peptidyl transferase center (PTC), which catalyzes the formation of peptide bonds, thereby polymerizing the amino acids delivered by tRNAs into a polypeptide chain. The nascent polypeptides leave the ribosome through a tunnel in the LSU and interact with protein factors that function in enzymatic processing, targeting, and the membrane insertion of nascent chains at the exit of the ribosomal tunnel. This chain is Large ribosomal subunit protein uL11A, found in Saccharomyces cerevisiae (strain ATCC 204508 / S288c) (Baker's yeast).